Consider the following 145-residue polypeptide: [Ribosomal protein bS18]-alanine N-acetyltransferase (145 aa).

Residues 1 to 145 enclose the N-acetyltransferase domain; it reads MIETIVEQDF…ENAVIMALYL (145 aa). An acetyl-CoA-binding site is contributed by 67 to 69; sequence LAV. Glu101 functions as the Proton acceptor in the catalytic mechanism. An acetyl-CoA-binding site is contributed by Asn106. Tyr113 functions as the Proton donor in the catalytic mechanism.

It belongs to the acetyltransferase family. RimI subfamily.

Its subcellular location is the cytoplasm. The enzyme catalyses N-terminal L-alanyl-[ribosomal protein bS18] + acetyl-CoA = N-terminal N(alpha)-acetyl-L-alanyl-[ribosomal protein bS18] + CoA + H(+). Its function is as follows. Acetylates the N-terminal alanine of ribosomal protein bS18. The protein is [Ribosomal protein bS18]-alanine N-acetyltransferase of Haemophilus ducreyi (strain 35000HP / ATCC 700724).